The sequence spans 100 residues: Large ribosomal subunit protein uL23 (100 aa).

This sequence belongs to the universal ribosomal protein uL23 family. As to quaternary structure, part of the 50S ribosomal subunit. Contacts protein L29, and trigger factor when it is bound to the ribosome.

Functionally, one of the early assembly proteins it binds 23S rRNA. One of the proteins that surrounds the polypeptide exit tunnel on the outside of the ribosome. Forms the main docking site for trigger factor binding to the ribosome. The sequence is that of Large ribosomal subunit protein uL23 from Sodalis glossinidius (strain morsitans).